Consider the following 445-residue polypeptide: 6-phosphogluconate dehydrogenase, decarboxylating (445 aa).

NADP(+) is bound by residues 1 to 4, 22 to 24, 63 to 65, and N91; these read AVMG, NRS, and VKA. Substrate-binding positions include N91 and 117–119; that span reads SGG. K172 (proton acceptor) is an active-site residue. 175-176 is a binding site for substrate; it reads HN. The active-site Proton donor is the E179. Substrate contacts are provided by Y180, K249, R276, R434, and H440.

It belongs to the 6-phosphogluconate dehydrogenase family. In terms of assembly, homodimer.

It carries out the reaction 6-phospho-D-gluconate + NADP(+) = D-ribulose 5-phosphate + CO2 + NADPH. It functions in the pathway carbohydrate degradation; pentose phosphate pathway; D-ribulose 5-phosphate from D-glucose 6-phosphate (oxidative stage): step 3/3. Its function is as follows. Catalyzes the oxidative decarboxylation of 6-phosphogluconate to ribulose 5-phosphate and CO(2), with concomitant reduction of NADP to NADPH. This chain is 6-phosphogluconate dehydrogenase, decarboxylating (gnd), found in Shigella dysenteriae.